A 229-amino-acid chain; its full sequence is Meiotically up-regulated gene 31 protein (229 aa).

2 disordered regions span residues 16–68 and 189–229; these read EDSA…EEDK and GLPE…TTWA.

The protein resides in the endoplasmic reticulum. Its function is as follows. Has a role in meiosis. The protein is Meiotically up-regulated gene 31 protein (mug31) of Schizosaccharomyces pombe (strain 972 / ATCC 24843) (Fission yeast).